The primary structure comprises 653 residues: Dystrotelin (653 aa).

Residues 223–279 (THPVRCSVCRTFPIIGLRYHCLKCLDFDICELCFLSGLHKNSHEKSHTVMEECVQMS) form a ZZ-type zinc finger. Zn(2+) is bound by residues Cys-228, Cys-231, Cys-243, Cys-246, Cys-252, Cys-255, His-265, and His-269. A coiled-coil region spans residues 384-411 (RDSLNTLLRERRLLRKQLHRYKQKLQGT).

Strongly expressed in the nervous and muscular tissues.

Its subcellular location is the cell membrane. The sequence is that of Dystrotelin (Dytn) from Mus musculus (Mouse).